Here is a 157-residue protein sequence, read N- to C-terminus: Ribosomal RNA large subunit methyltransferase H (157 aa).

Residues Leu-73, Gly-105, and 124–129 (LSQMTF) contribute to the S-adenosyl-L-methionine site.

It belongs to the RNA methyltransferase RlmH family. Homodimer.

It localises to the cytoplasm. The catalysed reaction is pseudouridine(1915) in 23S rRNA + S-adenosyl-L-methionine = N(3)-methylpseudouridine(1915) in 23S rRNA + S-adenosyl-L-homocysteine + H(+). Specifically methylates the pseudouridine at position 1915 (m3Psi1915) in 23S rRNA. The sequence is that of Ribosomal RNA large subunit methyltransferase H from Flavobacterium psychrophilum (strain ATCC 49511 / DSM 21280 / CIP 103535 / JIP02/86).